The chain runs to 559 residues: Serine/threonine-protein kinase VRK1 (559 aa).

A Protein kinase domain is found at 32-388 (YIVGKQFATG…EDDDEEEEVI (357 aa)). ATP is bound by residues 38–46 (FATGGFGRI) and Lys-61. Asp-167 functions as the Proton acceptor in the catalytic mechanism. Disordered stretches follow at residues 315–419 (EAAQ…ATSD) and 448–559 (SSCE…SSEV). 2 stretches are compositionally biased toward polar residues: residues 405–418 (RSFN…TATS) and 449–460 (SCESQYESNEPG). Basic and acidic residues predominate over residues 533–542 (TSARYQEKRA). Positions 545–559 (NTKPTFDDSSCSSEV) are enriched in polar residues.

Belongs to the protein kinase superfamily. CK1 Ser/Thr protein kinase family. VRK subfamily. Post-translationally, autophosphorylates in vitro.

The protein resides in the nucleus. Its subcellular location is the cytoplasm. The protein localises to the cajal body. It carries out the reaction L-seryl-[protein] + ATP = O-phospho-L-seryl-[protein] + ADP + H(+). The catalysed reaction is L-threonyl-[protein] + ATP = O-phospho-L-threonyl-[protein] + ADP + H(+). Functionally, serine/threonine kinase that phosphorylates baf-1, thus regulating the association of baf-1 with chromatin and nuclear membrane proteins during nuclear envelope formation. May act through the egl-17 signaling pathway. Essential in hermaphrodites for formation of the vulva, uterus, and uterine seam cells and for development and maintenance of the somatic gonad and thus the germ line. Acts to prevent cep-1 from triggering an inappropriate cell cycle arrest, thereby promoting germ cell proliferation. Regulates anchor cell polarity and the timing of anchor cell invasion through the basement membranes separating vulval and somatic gonadal cells during the L3 larval stage. The polypeptide is Serine/threonine-protein kinase VRK1 (Caenorhabditis briggsae).